The chain runs to 531 residues: Peptide chain release factor 3 (531 aa).

In terms of domain architecture, tr-type G spans alanine 10–leucine 278. GTP contacts are provided by residues serine 19 to threonine 26, aspartate 87 to histidine 91, and asparagine 141 to aspartate 144.

This sequence belongs to the TRAFAC class translation factor GTPase superfamily. Classic translation factor GTPase family. PrfC subfamily.

The protein localises to the cytoplasm. Increases the formation of ribosomal termination complexes and stimulates activities of RF-1 and RF-2. It binds guanine nucleotides and has strong preference for UGA stop codons. It may interact directly with the ribosome. The stimulation of RF-1 and RF-2 is significantly reduced by GTP and GDP, but not by GMP. The polypeptide is Peptide chain release factor 3 (Thioalkalivibrio sulfidiphilus (strain HL-EbGR7)).